Consider the following 96-residue polypeptide: Small ribosomal subunit protein bS18 (96 aa).

The protein belongs to the bacterial ribosomal protein bS18 family. Part of the 30S ribosomal subunit. Forms a tight heterodimer with protein bS6.

Binds as a heterodimer with protein bS6 to the central domain of the 16S rRNA, where it helps stabilize the platform of the 30S subunit. The polypeptide is Small ribosomal subunit protein bS18 (Borreliella afzelii (strain PKo) (Borrelia afzelii)).